The sequence spans 277 residues: Large ribosomal subunit protein uL2 (277 aa).

2 disordered regions span residues Lys-32–Gly-58 and Val-225–Lys-277. A compositionally biased stretch (basic residues) spans Tyr-258 to Lys-277.

Belongs to the universal ribosomal protein uL2 family. In terms of assembly, part of the 50S ribosomal subunit. Forms a bridge to the 30S subunit in the 70S ribosome.

Its function is as follows. One of the primary rRNA binding proteins. Required for association of the 30S and 50S subunits to form the 70S ribosome, for tRNA binding and peptide bond formation. It has been suggested to have peptidyltransferase activity; this is somewhat controversial. Makes several contacts with the 16S rRNA in the 70S ribosome. The polypeptide is Large ribosomal subunit protein uL2 (Borrelia garinii subsp. bavariensis (strain ATCC BAA-2496 / DSM 23469 / PBi) (Borreliella bavariensis)).